Consider the following 386-residue polypeptide: 8-amino-7-oxononanoate synthase (386 aa).

Residue R19 participates in substrate binding. 106–107 (GY) is a binding site for pyridoxal 5'-phosphate. H131 serves as a coordination point for substrate. Pyridoxal 5'-phosphate contacts are provided by S177, H205, and T233. At K236 the chain carries N6-(pyridoxal phosphate)lysine. T350 contributes to the substrate binding site.

Belongs to the class-II pyridoxal-phosphate-dependent aminotransferase family. BioF subfamily. In terms of assembly, homodimer. Pyridoxal 5'-phosphate serves as cofactor.

The enzyme catalyses 6-carboxyhexanoyl-[ACP] + L-alanine + H(+) = (8S)-8-amino-7-oxononanoate + holo-[ACP] + CO2. The protein operates within cofactor biosynthesis; biotin biosynthesis. Catalyzes the decarboxylative condensation of pimeloyl-[acyl-carrier protein] and L-alanine to produce 8-amino-7-oxononanoate (AON), [acyl-carrier protein], and carbon dioxide. The polypeptide is 8-amino-7-oxononanoate synthase (Alcanivorax borkumensis (strain ATCC 700651 / DSM 11573 / NCIMB 13689 / SK2)).